The chain runs to 196 residues: Large ribosomal subunit protein bL25 (196 aa).

The interval 177-196 (VISIAPPKKDAEAETESAAG) is disordered.

This sequence belongs to the bacterial ribosomal protein bL25 family. CTC subfamily. As to quaternary structure, part of the 50S ribosomal subunit; part of the 5S rRNA/L5/L18/L25 subcomplex. Contacts the 5S rRNA. Binds to the 5S rRNA independently of L5 and L18.

In terms of biological role, this is one of the proteins that binds to the 5S RNA in the ribosome where it forms part of the central protuberance. The polypeptide is Large ribosomal subunit protein bL25 (Chlorobium limicola (strain DSM 245 / NBRC 103803 / 6330)).